Consider the following 1523-residue polypeptide: Disco-interacting protein 2 homolog A (1523 aa).

One can recognise a DMAP1-binding domain in the interval 9-105 (EAAPLPAEVL…TSSASEDEGS (97 aa)). The disordered stretch occupies residues 72–110 (KMPMPSKRRSALVHSSVETYTPPDTSSASEDEGSLRRPG). The segment covering 87 to 99 (SVETYTPPDTSSA) has biased composition (polar residues). Phosphothreonine occurs at positions 92 and 115. A disordered region spans residues 132–158 (QGSSTSSSASSTSSHPGGRPAAAPSAS). Positions 134–158 (SSTSSSASSTSSHPGGRPAAAPSAS) are enriched in low complexity. Short sequence motifs (PXXP motif; required for interaction with CTTN) lie at residues 235-238 (PKRP) and 259-262 (PNQP).

The protein belongs to the DIP2 family. In terms of assembly, interacts with FSTL1; DIP2A may act as a cell surface receptor for FSTL1. Interacts (via N-terminus) with CTTN (via SH3 domain); the interaction promotes acetylation of CTTN and is required for proper synaptic transmission. Interacts with SHANK3. As to expression, detected in heart, liver, spleen, lung, kidney and brain with highest levels in brain (at protein level). In adult cortex, preferentially expressed in excitatory neurons. Broadly expressed in neuronal, reproductive and vascular tissues as well as in heart, kidney, liver and lung with expression detected in neurons, mesenchyme, endothelium, smooth muscle cells and cardiomyocytes. Expressed in ectoderm-derived tissues in the developing embryo. Expressed in the developing nervous system.

The protein localises to the cell membrane. The protein resides in the mitochondrion. It is found in the cell projection. Its subcellular location is the dendritic spine. It catalyses the reaction acetate + ATP + CoA = acetyl-CoA + AMP + diphosphate. In terms of biological role, catalyzes the de novo synthesis of acetyl-CoA in vitro. Promotes acetylation of CTTN, possibly by providing the acetyl donor, ensuring correct dendritic spine morphology and synaptic transmission. Binds to follistatin-related protein FSTL1 and may act as a cell surface receptor for FSTL1, contributing to AKT activation and subsequent FSTL1-induced survival and function of endothelial cells and cardiac myocytes. The chain is Disco-interacting protein 2 homolog A (Dip2a) from Mus musculus (Mouse).